The following is a 37-amino-acid chain: Large ribosomal subunit protein bL36 (37 aa).

It belongs to the bacterial ribosomal protein bL36 family.

The chain is Large ribosomal subunit protein bL36 from Solidesulfovibrio magneticus (strain ATCC 700980 / DSM 13731 / RS-1) (Desulfovibrio magneticus).